We begin with the raw amino-acid sequence, 321 residues long: Glucokinase (321 aa).

ATP is bound at residue 8 to 13 (GDVGGT).

The protein belongs to the bacterial glucokinase family.

It is found in the cytoplasm. It carries out the reaction D-glucose + ATP = D-glucose 6-phosphate + ADP + H(+). The polypeptide is Glucokinase (Shigella flexneri serotype 5b (strain 8401)).